A 688-amino-acid polypeptide reads, in one-letter code: Nucleolar protein 10 (688 aa).

An N-acetylmethionine modification is found at Met-1. Ser-25 carries the phosphoserine modification. 7 WD repeats span residues 44-82 (ELIQ…CYDT), 88-124 (KFER…FHSQ), 127-163 (FYYK…RLNL), 170-205 (NPLQ…CWDP), 219-258 (NSVT…LYDL), 262-300 (KPLL…MWNK), and 304-341 (KIFT…IYYI). A coiled-coil region spans residues 423–446 (EYRKDKIRQKIEETRAQRVQLKKL). Ser-475 is modified (phosphoserine). Position 481 is a phosphothreonine (Thr-481). The residue at position 514 (Ser-514) is a Phosphoserine. 2 coiled-coil regions span residues 514–589 (SEKR…TVLK) and 640–673 (SKQL…LRRS). Disordered regions lie at residues 529–557 (LREK…EKAW) and 645–688 (FTLK…RSFH). The span at 648–663 (KRSEQQKKQQEAEKLH) shows a compositional bias: basic and acidic residues. Over residues 664-688 (RQERKRLRRSAGHLKSRHKRGRSFH) the composition is skewed to basic residues.

Belongs to the WD repeat NOL10/ENP2 family.

It localises to the nucleus. Its subcellular location is the nucleolus. The sequence is that of Nucleolar protein 10 (NOL10) from Homo sapiens (Human).